The chain runs to 148 residues: Small ribosomal subunit protein bS6 (148 aa).

The disordered stretch occupies residues 96-148 (HEEGQSAMLTRRDDRRERDGDDRPRRREGGFDRGDRGDRSPRRPRDNEAGEGA).

This sequence belongs to the bacterial ribosomal protein bS6 family.

In terms of biological role, binds together with bS18 to 16S ribosomal RNA. The sequence is that of Small ribosomal subunit protein bS6 from Brucella suis (strain ATCC 23445 / NCTC 10510).